The following is a 489-amino-acid chain: MASAASVTSLADEVNCPVCQGTLREPVTIDCGHNFCRVCLTRYLEITSPDPEEPPTCPLCKEPFRPGNFRPNWQLANVVENIERLKLVSQMDLDEEDVCPEHGEKVYFFCEDDEMQLCVVCREAWEHRAHTVRFLEDAAGPYREQIQKCLECLRKEREEIQEIQSRENRRIQVLLTQVATKKQKVISEFAHLSQFLEEQQNILLDQLEKLDEDILKHRDEFDVLVTGEIGRFNTLIEELEEKKERPARELLTDIRSTLIRCETRRCRKPVAISPELGQRIRDFPQQAFPLQREMKMFLEKLSFELDYEPAHISLDPRTSHPKLLLSEDYQQARFSYKWQKSPDNPQRFDRATCVLAHGGFTGGRHTWVVSVDLAHGGSCTLGVVSKDIRRKGELRMRPEEGVWAVRLAWGFVSALSSFPTRLTLEEQPQQVRVSIDYEVGWVTFANAVTQEPIYTFTASFTQKVFPFFGLWGRGSKFSLSSQEGAATLS.

The segment at cysteine 16–lysine 61 adopts an RING-type zinc-finger fold. Residues aspartate 94 to leucine 135 form a B box-type zinc finger. Residues cysteine 99, histidine 102, cysteine 121, and histidine 127 each coordinate Zn(2+). The stretch at tyrosine 142 to arginine 245 forms a coiled coil. Residues arginine 292–alanine 486 enclose the B30.2/SPRY domain.

Belongs to the TRIM/RBCC family. In terms of assembly, interacts with IFNAR1; this interaction prevents association of IFNAR1 with TYK2.

It is found in the cytoplasm. Functionally, E3 ligase that plays an essential role in the differentiation and survival of terminal erythroid cells. May directly bind to PTEN and promote its ubiquitination, resulting in its proteasomal degradation and activation of hypertrophic signaling. In addition, plays a role in immune response regulation by repressing the phosphorylation of STAT1 and STAT2 in the interferon/JAK/STAT signaling pathway independent of its E3 ligase activity. Mechanistically, interacts with the intracellular domain of IFNAR1 and thereby inhibits the association between TYK2 and IFNAR1. This Bos taurus (Bovine) protein is Tripartite motif-containing protein 10 (TRIM10).